The primary structure comprises 342 residues: ATP-dependent (S)-NAD(P)H-hydrate dehydratase (342 aa).

The YjeF C-terminal domain maps to 11–337 (ILPALEKVVP…EYLGHRLFTF (327 aa)). Residues Gly-127 and 180 to 186 (NVMEHKR) contribute to the (6S)-NADPHX site. Residues 229-233 (KGKTD) and 248-257 (GSPRRCGGQG) each bind ATP. Asp-258 contacts (6S)-NADPHX.

This sequence belongs to the NnrD/CARKD family. Mg(2+) is required as a cofactor.

It carries out the reaction (6S)-NADHX + ATP = ADP + phosphate + NADH + H(+). The catalysed reaction is (6S)-NADPHX + ATP = ADP + phosphate + NADPH + H(+). In terms of biological role, catalyzes the dehydration of the S-form of NAD(P)HX at the expense of ATP, which is converted to ADP. Together with NAD(P)HX epimerase, which catalyzes the epimerization of the S- and R-forms, the enzyme allows the repair of both epimers of NAD(P)HX, a damaged form of NAD(P)H that is a result of enzymatic or heat-dependent hydration. The protein is ATP-dependent (S)-NAD(P)H-hydrate dehydratase of Physcomitrium patens (Spreading-leaved earth moss).